We begin with the raw amino-acid sequence, 124 residues long: Small ribosomal subunit protein uS12 (124 aa).

Asp-89 carries the post-translational modification 3-methylthioaspartic acid.

It belongs to the universal ribosomal protein uS12 family. Part of the 30S ribosomal subunit. Contacts proteins S8 and S17. May interact with IF1 in the 30S initiation complex.

With S4 and S5 plays an important role in translational accuracy. In terms of biological role, interacts with and stabilizes bases of the 16S rRNA that are involved in tRNA selection in the A site and with the mRNA backbone. Located at the interface of the 30S and 50S subunits, it traverses the body of the 30S subunit contacting proteins on the other side and probably holding the rRNA structure together. The combined cluster of proteins S8, S12 and S17 appears to hold together the shoulder and platform of the 30S subunit. In Shewanella loihica (strain ATCC BAA-1088 / PV-4), this protein is Small ribosomal subunit protein uS12.